Reading from the N-terminus, the 601-residue chain is Glutamine--fructose-6-phosphate aminotransferase [isomerizing] (601 aa).

Cys2 serves as the catalytic Nucleophile; for GATase activity. Residues 2-218 (CGIVGYIGYD…DHEIVIVKKD (217 aa)) form the Glutamine amidotransferase type-2 domain. SIS domains lie at 284 to 423 (IIND…EHGR) and 453 to 591 (IATD…VDKP). Residue Lys596 is the For Fru-6P isomerization activity of the active site.

As to quaternary structure, homodimer.

The protein resides in the cytoplasm. It catalyses the reaction D-fructose 6-phosphate + L-glutamine = D-glucosamine 6-phosphate + L-glutamate. Catalyzes the first step in hexosamine metabolism, converting fructose-6P into glucosamine-6P using glutamine as a nitrogen source. The chain is Glutamine--fructose-6-phosphate aminotransferase [isomerizing] from Staphylococcus aureus (strain MRSA252).